Consider the following 81-residue polypeptide: Photosystem I iron-sulfur center (81 aa).

4Fe-4S ferredoxin-type domains lie at 2–31 (SHTVKIYDTCIGCTQCVRACPTDVLEMVPW) and 39–68 (VASSPRTEDCVGCKRCETACPTDFLSIRVY). Cys11, Cys14, Cys17, Cys21, Cys48, Cys51, Cys54, and Cys58 together coordinate [4Fe-4S] cluster.

In terms of assembly, the cyanobacterial PSI reaction center is composed of one copy each of PsaA,B,C,D,E,F,I,J,K,L,M and X, and forms trimeric complexes. It depends on [4Fe-4S] cluster as a cofactor.

The protein localises to the cellular thylakoid membrane. It catalyses the reaction reduced [plastocyanin] + hnu + oxidized [2Fe-2S]-[ferredoxin] = oxidized [plastocyanin] + reduced [2Fe-2S]-[ferredoxin]. Apoprotein for the two 4Fe-4S centers FA and FB of photosystem I (PSI); essential for photochemical activity. FB is the terminal electron acceptor of PSI, donating electrons to ferredoxin. The C-terminus interacts with PsaA/B/D and helps assemble the protein into the PSI complex. Required for binding of PsaD and PsaE to PSI. PSI is a plastocyanin/cytochrome c6-ferredoxin oxidoreductase, converting photonic excitation into a charge separation, which transfers an electron from the donor P700 chlorophyll pair to the spectroscopically characterized acceptors A0, A1, FX, FA and FB in turn. The protein is Photosystem I iron-sulfur center of Trichormus variabilis (strain ATCC 29413 / PCC 7937) (Anabaena variabilis).